The chain runs to 65 residues: Large ribosomal subunit protein uL29 (65 aa).

Belongs to the universal ribosomal protein uL29 family.

In Buchnera aphidicola subsp. Baizongia pistaciae (strain Bp), this protein is Large ribosomal subunit protein uL29.